A 433-amino-acid polypeptide reads, in one-letter code: NADH-quinone oxidoreductase subunit D (433 aa).

Belongs to the complex I 49 kDa subunit family. As to quaternary structure, NDH-1 is composed of 14 different subunits. Subunits NuoB, C, D, E, F, and G constitute the peripheral sector of the complex.

The protein localises to the cell membrane. The enzyme catalyses a quinone + NADH + 5 H(+)(in) = a quinol + NAD(+) + 4 H(+)(out). Functionally, NDH-1 shuttles electrons from NADH, via FMN and iron-sulfur (Fe-S) centers, to quinones in the respiratory chain. The immediate electron acceptor for the enzyme in this species is believed to be a menaquinone. Couples the redox reaction to proton translocation (for every two electrons transferred, four hydrogen ions are translocated across the cytoplasmic membrane), and thus conserves the redox energy in a proton gradient. This Cutibacterium acnes (strain DSM 16379 / KPA171202) (Propionibacterium acnes) protein is NADH-quinone oxidoreductase subunit D.